A 124-amino-acid chain; its full sequence is MARLAGVDLPREKRMEIALTYIYGIGRTRSKEILDATGVSPDLRSKDLSDEDLAKLREYIEESLKVEGDLRREVQADIRRKIEIGCYQGLRHRRGLPVRGQRTKTNARTRKGPKRTIAGKKKAK.

The segment at 95-124 (GLPVRGQRTKTNARTRKGPKRTIAGKKKAK) is disordered.

The protein belongs to the universal ribosomal protein uS13 family. As to quaternary structure, part of the 30S ribosomal subunit. Forms a loose heterodimer with protein S19. Forms two bridges to the 50S subunit in the 70S ribosome.

Its function is as follows. Located at the top of the head of the 30S subunit, it contacts several helices of the 16S rRNA. In the 70S ribosome it contacts the 23S rRNA (bridge B1a) and protein L5 of the 50S subunit (bridge B1b), connecting the 2 subunits; these bridges are implicated in subunit movement. Contacts the tRNAs in the A and P-sites. The protein is Small ribosomal subunit protein uS13 of Rhodococcus jostii (strain RHA1).